The sequence spans 235 residues: Type III pantothenate kinase (235 aa).

Residue 6-13 (DVGNNYIK) participates in ATP binding. Substrate is bound by residues Tyr-81 and 88–91 (GTDR). The active-site Proton acceptor is the Asp-90. Asp-111 is a binding site for K(+). Thr-114 serves as a coordination point for ATP. Residue Thr-166 participates in substrate binding.

This sequence belongs to the type III pantothenate kinase family. Homodimer. The cofactor is NH4(+). It depends on K(+) as a cofactor.

It localises to the cytoplasm. It catalyses the reaction (R)-pantothenate + ATP = (R)-4'-phosphopantothenate + ADP + H(+). Its pathway is cofactor biosynthesis; coenzyme A biosynthesis; CoA from (R)-pantothenate: step 1/5. Functionally, catalyzes the phosphorylation of pantothenate (Pan), the first step in CoA biosynthesis. This chain is Type III pantothenate kinase, found in Cytophaga hutchinsonii (strain ATCC 33406 / DSM 1761 / CIP 103989 / NBRC 15051 / NCIMB 9469 / D465).